The primary structure comprises 411 residues: Probable tRNA pseudouridine synthase D (411 aa).

Asp-79 acts as the Nucleophile in catalysis. In terms of domain architecture, TRUD spans 150 to 369; the sequence is GFPNYFGQQR…STGDRRIVSA (220 aa).

This sequence belongs to the pseudouridine synthase TruD family.

It carries out the reaction uridine(13) in tRNA = pseudouridine(13) in tRNA. Its function is as follows. Could be responsible for synthesis of pseudouridine from uracil-13 in transfer RNAs. In Thermoplasma acidophilum (strain ATCC 25905 / DSM 1728 / JCM 9062 / NBRC 15155 / AMRC-C165), this protein is Probable tRNA pseudouridine synthase D.